The sequence spans 110 residues: G antigen 2E (110 aa).

Residues 1–110 (MSWRGRSTYY…NPEEVKTPEE (110 aa)) form a disordered region. Composition is skewed to acidic residues over residues 32–45 (FSDE…EEGE) and 87–96 (ECEDGPDGQE).

The protein belongs to the GAGE family.

The polypeptide is G antigen 2E (GAGE2E) (Homo sapiens (Human)).